Here is a 416-residue protein sequence, read N- to C-terminus: Meiotically up-regulated protein PB1A10.08 (416 aa).

The protein localises to the cytoplasm. Functionally, may have a role in meiosis and sporulation. This is Meiotically up-regulated protein PB1A10.08 from Schizosaccharomyces pombe (strain 972 / ATCC 24843) (Fission yeast).